Here is a 315-residue protein sequence, read N- to C-terminus: Methionyl-tRNA formyltransferase (315 aa).

113 to 116 serves as a coordination point for (6S)-5,6,7,8-tetrahydrofolate; that stretch reads SLLP.

Belongs to the Fmt family.

The catalysed reaction is L-methionyl-tRNA(fMet) + (6R)-10-formyltetrahydrofolate = N-formyl-L-methionyl-tRNA(fMet) + (6S)-5,6,7,8-tetrahydrofolate + H(+). Its function is as follows. Attaches a formyl group to the free amino group of methionyl-tRNA(fMet). The formyl group appears to play a dual role in the initiator identity of N-formylmethionyl-tRNA by promoting its recognition by IF2 and preventing the misappropriation of this tRNA by the elongation apparatus. This chain is Methionyl-tRNA formyltransferase, found in Cronobacter sakazakii (strain ATCC BAA-894) (Enterobacter sakazakii).